The chain runs to 520 residues: MNLKEEIESRKTFAIISHPDAGKTTLTEKLLYFSGAIREAGTVKGKKTGKFATSDWMKVEQERGISVTSSVMQFDYDDYKINILDTPGHEDFSEDTYRTLMAVDSAVMVIDCAKGIEPQTLKLFKVCKMRGIPIFTFINKLDRVGKEPFELLDEIEETLNIDTYPMNWPVGMGQNFFGIIDRHSKTIEPFRDEENLLHLNEDYELKEEHAIKNDSAFEQAIEEMMLVDEAGEAFDNEALLNGELTPVFFGSALANFGVQNFLNAYVDHAPMPNARQTKEEVDVSPFDTDFSGFIFKIQANMDPKHRDRIAFMRVVSGAFERGMDVTLQRTNKKQKITRSTSFMADDKETVNHAVAGDIIGLYDTGNYQIGDTLVGGKQKYSFQELPQFTPEIFMKVSAKNVMKQKHFHKGIEQLVQEGAIQYYKTLHTNQIILGAVGQLQFEVFEHRMNNEYNVDVVMEPVGRKIARWIENEEDIKDNMNTSRSILVKDRYDNYVFLFENEFATRWFEEKFSDIKLYSLL.

In terms of domain architecture, tr-type G spans 8-277 (ESRKTFAIIS…HAPMPNARQT (270 aa)). GTP-binding positions include 17–24 (SHPDAGKT), 85–89 (DTPGH), and 139–142 (NKLD).

It belongs to the TRAFAC class translation factor GTPase superfamily. Classic translation factor GTPase family. PrfC subfamily.

It is found in the cytoplasm. Its function is as follows. Increases the formation of ribosomal termination complexes and stimulates activities of RF-1 and RF-2. It binds guanine nucleotides and has strong preference for UGA stop codons. It may interact directly with the ribosome. The stimulation of RF-1 and RF-2 is significantly reduced by GTP and GDP, but not by GMP. This chain is Peptide chain release factor 3, found in Staphylococcus epidermidis (strain ATCC 35984 / DSM 28319 / BCRC 17069 / CCUG 31568 / BM 3577 / RP62A).